Consider the following 81-residue polypeptide: Small ribosomal subunit protein eS21 (81 aa).

This sequence belongs to the eukaryotic ribosomal protein eS21 family.

This Zea mays (Maize) protein is Small ribosomal subunit protein eS21 (RPS21).